A 127-amino-acid polypeptide reads, in one-letter code: Major sperm protein isoform alpha (127 aa).

Ala2 is modified (N-acetylalanine). Positions 9–126 (DINTQPSQKI…RRKNLPIEYN (118 aa)) constitute an MSP domain.

In terms of assembly, forms filaments 10 nm wide, with a characteristic substructure repeating axially at 9 nm. In terms of tissue distribution, sperm.

The protein localises to the cell projection. Its subcellular location is the pseudopodium. It is found in the cytoplasm. The protein resides in the cytoskeleton. In terms of biological role, central component in molecular interactions underlying sperm crawling. Forms an extensive filament system that extends from sperm villipoda, along the leading edge of the pseudopod. This chain is Major sperm protein isoform alpha, found in Ascaris suum (Pig roundworm).